The chain runs to 460 residues: Bifunctional protein GlmU (460 aa).

Residues 1-229 are pyrophosphorylase; sequence MTNYAIILAA…FNESLGVNDR (229 aa). UDP-N-acetyl-alpha-D-glucosamine contacts are provided by residues 8 to 11, K22, Q72, and 77 to 78; these read LAAG and GT. A Mg(2+)-binding site is contributed by D102. 4 residues coordinate UDP-N-acetyl-alpha-D-glucosamine: G139, E154, N169, and N227. Position 227 (N227) interacts with Mg(2+). The linker stretch occupies residues 230 to 250; it reads VALAIAETVMRQRITQKHMVN. Positions 251-460 are N-acetyltransferase; sequence GVTFQNPETV…RLAHHPSRSK (210 aa). UDP-N-acetyl-alpha-D-glucosamine is bound by residues R332 and K350. H362 acts as the Proton acceptor in catalysis. 2 residues coordinate UDP-N-acetyl-alpha-D-glucosamine: Y365 and N376. Acetyl-CoA contacts are provided by residues A379, 385–386, S404, A422, and R439; that span reads NY.

This sequence in the N-terminal section; belongs to the N-acetylglucosamine-1-phosphate uridyltransferase family. In the C-terminal section; belongs to the transferase hexapeptide repeat family. Homotrimer. Mg(2+) is required as a cofactor.

The protein localises to the cytoplasm. It carries out the reaction alpha-D-glucosamine 1-phosphate + acetyl-CoA = N-acetyl-alpha-D-glucosamine 1-phosphate + CoA + H(+). The catalysed reaction is N-acetyl-alpha-D-glucosamine 1-phosphate + UTP + H(+) = UDP-N-acetyl-alpha-D-glucosamine + diphosphate. It functions in the pathway nucleotide-sugar biosynthesis; UDP-N-acetyl-alpha-D-glucosamine biosynthesis; N-acetyl-alpha-D-glucosamine 1-phosphate from alpha-D-glucosamine 6-phosphate (route II): step 2/2. The protein operates within nucleotide-sugar biosynthesis; UDP-N-acetyl-alpha-D-glucosamine biosynthesis; UDP-N-acetyl-alpha-D-glucosamine from N-acetyl-alpha-D-glucosamine 1-phosphate: step 1/1. It participates in bacterial outer membrane biogenesis; LPS lipid A biosynthesis. Catalyzes the last two sequential reactions in the de novo biosynthetic pathway for UDP-N-acetylglucosamine (UDP-GlcNAc). The C-terminal domain catalyzes the transfer of acetyl group from acetyl coenzyme A to glucosamine-1-phosphate (GlcN-1-P) to produce N-acetylglucosamine-1-phosphate (GlcNAc-1-P), which is converted into UDP-GlcNAc by the transfer of uridine 5-monophosphate (from uridine 5-triphosphate), a reaction catalyzed by the N-terminal domain. The chain is Bifunctional protein GlmU from Streptococcus pyogenes serotype M1.